Reading from the N-terminus, the 303-residue chain is Diaminopimelate epimerase (303 aa).

2 residues coordinate substrate: Asn-15 and Asn-72. Catalysis depends on Cys-81, which acts as the Proton donor. Residues 82-83 (GN), Asn-169, Asn-202, and 220-221 (ER) each bind substrate. Cys-229 serves as the catalytic Proton acceptor. A substrate-binding site is contributed by 230 to 231 (GT).

Belongs to the diaminopimelate epimerase family. In terms of assembly, homodimer.

It localises to the cytoplasm. It carries out the reaction (2S,6S)-2,6-diaminopimelate = meso-2,6-diaminopimelate. Its pathway is amino-acid biosynthesis; L-lysine biosynthesis via DAP pathway; DL-2,6-diaminopimelate from LL-2,6-diaminopimelate: step 1/1. Functionally, catalyzes the stereoinversion of LL-2,6-diaminopimelate (L,L-DAP) to meso-diaminopimelate (meso-DAP), a precursor of L-lysine and an essential component of the bacterial peptidoglycan. In Prochlorococcus marinus (strain MIT 9313), this protein is Diaminopimelate epimerase.